The primary structure comprises 211 residues: N-(5'-phosphoribosyl)anthranilate isomerase (211 aa).

This sequence belongs to the TrpF family.

The enzyme catalyses N-(5-phospho-beta-D-ribosyl)anthranilate = 1-(2-carboxyphenylamino)-1-deoxy-D-ribulose 5-phosphate. It participates in amino-acid biosynthesis; L-tryptophan biosynthesis; L-tryptophan from chorismate: step 3/5. In Zymomonas mobilis subsp. pomaceae (strain ATCC 29192 / DSM 22645 / JCM 10191 / CCUG 17912 / NBRC 13757 / NCIMB 11200 / NRRL B-4491 / Barker I), this protein is N-(5'-phosphoribosyl)anthranilate isomerase.